We begin with the raw amino-acid sequence, 129 residues long: Translation initiation factor 5A (129 aa).

A Hypusine modification is found at lysine 36.

Belongs to the eIF-5A family.

The protein localises to the cytoplasm. Functionally, functions by promoting the formation of the first peptide bond. This chain is Translation initiation factor 5A (eif5a), found in Thermoplasma acidophilum (strain ATCC 25905 / DSM 1728 / JCM 9062 / NBRC 15155 / AMRC-C165).